The chain runs to 644 residues: ATP-dependent zinc metalloprotease FtsH (644 aa).

Residues 1 to 13 (MANNDNKHRRSMS) lie on the Cytoplasmic side of the membrane. A helical transmembrane segment spans residues 14–34 (MLLYIAVAIFVYLLLSNTLLP). Residues 35-117 (GLLRQQIQTV…SIPDNSANML (83 aa)) are Extracellular-facing. The chain crosses the membrane as a helical span at residues 118-138 (MYALIQYGIPLIIFLGIGFFI). The Cytoplasmic segment spans residues 139–644 (NRSLKRAMGD…DEGSSTPSEE (506 aa)). Position 224 to 231 (224 to 231 (GPPGTGKT)) interacts with ATP. H445 lines the Zn(2+) pocket. E446 is an active-site residue. Zn(2+)-binding residues include H449 and D522.

It in the central section; belongs to the AAA ATPase family. The protein in the C-terminal section; belongs to the peptidase M41 family. As to quaternary structure, homohexamer. Zn(2+) serves as cofactor.

It localises to the cell membrane. In terms of biological role, acts as a processive, ATP-dependent zinc metallopeptidase for both cytoplasmic and membrane proteins. Plays a role in the quality control of integral membrane proteins. This is ATP-dependent zinc metalloprotease FtsH from Lancefieldella parvula (strain ATCC 33793 / DSM 20469 / CCUG 32760 / JCM 10300 / KCTC 3663 / VPI 0546 / 1246) (Atopobium parvulum).